The following is a 460-amino-acid chain: UDP-N-acetylmuramate--L-alanine ligase (460 aa).

ATP is bound at residue Gly-118 to Thr-124.

This sequence belongs to the MurCDEF family.

Its subcellular location is the cytoplasm. It catalyses the reaction UDP-N-acetyl-alpha-D-muramate + L-alanine + ATP = UDP-N-acetyl-alpha-D-muramoyl-L-alanine + ADP + phosphate + H(+). Its pathway is cell wall biogenesis; peptidoglycan biosynthesis. Its function is as follows. Cell wall formation. In Gloeobacter violaceus (strain ATCC 29082 / PCC 7421), this protein is UDP-N-acetylmuramate--L-alanine ligase.